The primary structure comprises 507 residues: MSHTFHCPQPLLVMIALTIFRYATLAIALIVGFVILKAIYNVFFHPLRNFPGPLRYRASRIFWVLDLIEGRQIYTIDQFHKRYGPVVRTAPDELSFTIPEAWRDIYGHRVGLVSGLPEIPKWPLFYKFTKQDVSIFNAPQGQHGTLRRALAHGFSEKSTRAQESIIGGYVDLLVTRLKEVADSKAPANMVQWYNYTTFDIVGDLVFGNSFHCLDNANYHPWVSLFADSTRQNSIFVGLKILGLDFLALATMPLVIRNMIKHFNLTKEWLRERRKLGTDRGDLIEGLLKKEGEGINFDEIHGTSMGLIFAGSETTATLLSGVTYLLLQNPKTLAKVTMEVRSSFKSDKEITLLSVQNLDYMLACLDEAFRLYPPVGIGLPRQIPKGGVKIAGIYVPEGSIVDVPQYAIHRSPDHWTEPESFHPERFLGDSRFASDKVETLQPFAVGPRNCIGRNLAYAEMRLILARVLYNFDLKMDPSCSGWLDGQKSHALWVKPPLKVQLTPTKATS.

Residues 24-44 traverse the membrane as a helical segment; the sequence is TLAIALIVGFVILKAIYNVFF. Residue cysteine 449 participates in heme binding.

It belongs to the cytochrome P450 family. Heme serves as cofactor.

It localises to the membrane. Its pathway is secondary metabolite biosynthesis. Cytochrome P450 monooxygenase; part of the gene cluster that mediates the biosynthesis of polyesters containing 2,4-dihydroxy-6-(2-hydroxypropyl)benzoate and 3-hydroxybutyrate moieties, such as talapolyester G, 15G256beta and 15G256beta-2; as well as to oxidized derivatives such as 15G256alpha. The biosynthesis of the polyesters probably starts with the formation of the diketide 3-hydroxybutyryl-S-ACP catalyzed by the partially reducing polyketide synthase tpeA. The acceptance of 3-hydroxybutyryl by the non-reducing polyketide synthase tpeB would initiate further elongation and cyclization, catalyzed by KS and PT, respectively, to form 2,4-dihydroxy-6-(2-hydroxyn-propyl)benzoyl-S-ACP intermediate. The TE domain could catalyze lactonization at this step to yield 6-hydroxymellein as a derailment product. The polyesterification process maybe occurs when additional molecules of 3-hydroxybutyryl are transferred to tpeB. Following the first esterification step, an intramolecular cyclization catalyzed by the TE domain of tpeB would give talarodioxadione 1, whereas the ethyl esterification of talapolyester G perhaps happens spontaneously. Further oxidation by the cytochrome P450 monooxygenase tpeC then leads to the formation of oxidized derivatives. The polypeptide is Cytochrome P450 monooxygenase tpeC (Talaromyces stipitatus (strain ATCC 10500 / CBS 375.48 / QM 6759 / NRRL 1006) (Penicillium stipitatum)).